The chain runs to 340 residues: UDP-3-O-acylglucosamine N-acyltransferase (340 aa).

H238 serves as the catalytic Proton acceptor.

This sequence belongs to the transferase hexapeptide repeat family. LpxD subfamily. As to quaternary structure, homotrimer.

It carries out the reaction a UDP-3-O-[(3R)-3-hydroxyacyl]-alpha-D-glucosamine + a (3R)-hydroxyacyl-[ACP] = a UDP-2-N,3-O-bis[(3R)-3-hydroxyacyl]-alpha-D-glucosamine + holo-[ACP] + H(+). It participates in bacterial outer membrane biogenesis; LPS lipid A biosynthesis. In terms of biological role, catalyzes the N-acylation of UDP-3-O-acylglucosamine using 3-hydroxyacyl-ACP as the acyl donor. Is involved in the biosynthesis of lipid A, a phosphorylated glycolipid that anchors the lipopolysaccharide to the outer membrane of the cell. The sequence is that of UDP-3-O-acylglucosamine N-acyltransferase from Shewanella frigidimarina (strain NCIMB 400).